Consider the following 224-residue polypeptide: UPF0758 protein PSPTO_0086 (224 aa).

Residues Ala102–Met224 enclose the MPN domain. The Zn(2+) site is built by His173, His175, and Asp186. The JAMM motif signature appears at His173 to Asp186.

The protein belongs to the UPF0758 family.

This chain is UPF0758 protein PSPTO_0086, found in Pseudomonas syringae pv. tomato (strain ATCC BAA-871 / DC3000).